Reading from the N-terminus, the 1094-residue chain is Probable arabinosyltransferase A (1094 aa).

13 helical membrane-spanning segments follow: residues 12 to 34 (IARL…VPLL), 205 to 224 (AVML…LAAL), 247 to 269 (GFAS…VIGA), 322 to 344 (VWMR…RFVL), 356 to 375 (SNRV…WLPF), 408 to 430 (AAVA…IALA), 451 to 470 (GLLA…TVVV), 519 to 536 (FAVL…FVLL), 543 to 565 (GLAS…LLTF), 575 to 597 (GAFA…RIGL), 604 to 626 (TLYV…GWFY), 641 to 663 (IASH…LAAW), and 684 to 706 (ILAS…GSMA).

Belongs to the emb family.

The protein resides in the cell membrane. Its function is as follows. Arabinosyl transferase responsible for the polymerization of arabinose into the arabinan of arabinogalactan. This Mycobacterium tuberculosis (strain CDC 1551 / Oshkosh) protein is Probable arabinosyltransferase A (embA).